The following is a 270-amino-acid chain: Phosphatidylinositol transfer protein alpha isoform (270 aa).

Residues threonine 58, lysine 60, glutamate 85, asparagine 89, threonine 96, and lysine 194 each contribute to the a 1,2-diacyl-sn-glycero-3-phospho-(1D-myo-inositol) site. Position 215 is an N6-acetyllysine (lysine 215). Residues 250-263 (TKRQLDEMRQKDPV) show a composition bias toward basic and acidic residues. The disordered stretch occupies residues 250 to 270 (TKRQLDEMRQKDPVKGMTADD).

Belongs to the PtdIns transfer protein family. PI transfer class I subfamily.

The protein localises to the cytoplasm. The protein resides in the nucleus. It catalyses the reaction a 1,2-diacyl-sn-glycero-3-phosphocholine(in) = a 1,2-diacyl-sn-glycero-3-phosphocholine(out). The enzyme catalyses a 1,2-diacyl-sn-glycero-3-phospho-(1D-myo-inositol)(in) = a 1,2-diacyl-sn-glycero-3-phospho-(1D-myo-inositol)(out). Phosphatidylinositol transfer activity is inhibited by N-ethylmaleimide. Its function is as follows. Catalyzes the transfer of phosphatidylinositol (PI) and phosphatidylcholine (PC) between membranes. Shows a preference for PI and PC containing shorter saturated or monosaturated acyl chains at the sn-1 and sn-2 positions. Preference order for PC is C16:1 &gt; C16:0 &gt; C18:1 &gt; C18:0 &gt; C20:4 and for PI is C16:1 &gt; C16:0 &gt; C18:1 &gt; C18:0 &gt; C20:4 &gt; C20:3. In Homo sapiens (Human), this protein is Phosphatidylinositol transfer protein alpha isoform (PITPNA).